The chain runs to 443 residues: Histidinol dehydrogenase (443 aa).

Residues Y127, Q185, and N208 each contribute to the NAD(+) site. Substrate-binding residues include S234, Q256, and H259. Zn(2+)-binding residues include Q256 and H259. Residues E323 and H324 each act as proton acceptor in the active site. Substrate-binding residues include H324, D357, E411, and H416. D357 is a Zn(2+) binding site. H416 is a Zn(2+) binding site.

Belongs to the histidinol dehydrogenase family. Requires Zn(2+) as cofactor.

It carries out the reaction L-histidinol + 2 NAD(+) + H2O = L-histidine + 2 NADH + 3 H(+). The protein operates within amino-acid biosynthesis; L-histidine biosynthesis; L-histidine from 5-phospho-alpha-D-ribose 1-diphosphate: step 9/9. Catalyzes the sequential NAD-dependent oxidations of L-histidinol to L-histidinaldehyde and then to L-histidine. In Photobacterium profundum (strain SS9), this protein is Histidinol dehydrogenase.